Reading from the N-terminus, the 241-residue chain is uncharacterized protein (241 aa).

One can recognise an HTH luxR-type domain in the interval 147 to 212 (FSYRSVILTL…EMYAWINSAQ (66 aa)).

This is an uncharacterized protein from Escherichia coli O157:H7.